A 213-amino-acid polypeptide reads, in one-letter code: Ras-related protein Rab-25 (213 aa).

9 residues coordinate GTP: serine 21, glycine 24, lysine 25, threonine 26, asparagine 27, serine 38, histidine 39, threonine 43, and threonine 44. Threonine 26 provides a ligand contact to Mg(2+). 2 short sequence motifs (switch) span residues 35-49 (NEFS…GVEF) and 67-84 (DTAG…YYRG). Residues threonine 44 and aspartate 67 each contribute to the Mg(2+) site. Glycine 70, asparagine 125, lysine 126, aspartate 128, alanine 156, and leucine 157 together coordinate GTP. 2 S-geranylgeranyl cysteine lipidation sites follow: cysteine 209 and cysteine 210. Residue cysteine 210 is modified to Cysteine methyl ester. Positions 211–213 (ISL) are cleaved as a propeptide — removed in mature form.

Belongs to the small GTPase superfamily. Rab family. Interacts (GTP-bound form) with RAB11FIP1, RAB11FIP2, RAB11FIP3 and RAB11FIP4. Interacts (via the hypervariable C-terminal region) with ITGB1 (via the cytoplasmic region); the interaction is GTP-dependent. Interacts with ITGAV. Associates with the integrin alpha-V/beta-1 heterodimer. Interacts with VPS33B. Requires Mg(2+) as cofactor. As to expression, expression is restricted to epithelial cells. Expressed in ovarian epithelium (NOE) and breast tissue. Expressed in ovarian cancer; expression is increased relative to NOE cells. Expression in ovarian cancer is stage dependent, with stage III and stage IV showing higher levels than early stage cancers. Expressed in breast cancer; expression is increased relative to normal breast tissue.

The protein localises to the cell membrane. The protein resides in the cytoplasmic vesicle. It is found in the cell projection. It localises to the pseudopodium membrane. It catalyses the reaction GTP + H2O = GDP + phosphate + H(+). With respect to regulation, regulated by guanine nucleotide exchange factors (GEFs) which promote the exchange of bound GDP for free GTP. Regulated by GTPase activating proteins (GAPs) which increase the GTP hydrolysis activity. Inhibited by GDP dissociation inhibitors (GDIs) which prevent Rab-GDP dissociation. Functionally, the small GTPases Rab are key regulators of intracellular membrane trafficking, from the formation of transport vesicles to their fusion with membranes. Rabs cycle between an inactive GDP-bound form and an active GTP-bound form that is able to recruit to membranes different set of downstream effectors directly responsible for vesicle formation, movement, tethering and fusion. RAB25 regulates epithelial cell differentiation, proliferation and survival, thereby playing key roles in tumorigenesis. Promotes invasive migration of cells in which it functions to localize and maintain integrin alpha-V/beta-1 at the tips of extending pseudopodia. Involved in the regulation of epithelial morphogenesis through the control of CLDN4 expression and localization at tight junctions. May selectively regulate the apical recycling pathway. Together with MYO5B regulates transcytosis. This chain is Ras-related protein Rab-25, found in Homo sapiens (Human).